The chain runs to 96 residues: Co-chaperonin GroES (96 aa).

The protein belongs to the GroES chaperonin family. In terms of assembly, heptamer of 7 subunits arranged in a ring. Interacts with the chaperonin GroEL.

The protein resides in the cytoplasm. Its function is as follows. Together with the chaperonin GroEL, plays an essential role in assisting protein folding. The GroEL-GroES system forms a nano-cage that allows encapsulation of the non-native substrate proteins and provides a physical environment optimized to promote and accelerate protein folding. GroES binds to the apical surface of the GroEL ring, thereby capping the opening of the GroEL channel. In Acinetobacter baumannii (strain AB307-0294), this protein is Co-chaperonin GroES.